The following is a 754-amino-acid chain: tRNA 5-methylaminomethyl-2-thiouridine biosynthesis bifunctional protein MnmC (754 aa).

The interval 1-320 is tRNA (mnm(5)s(2)U34)-methyltransferase; that stretch reads MPSCYEHSAQ…RRQAVNNSDS (320 aa). An FAD-dependent cmnm(5)s(2)U34 oxidoreductase region spans residues 324–754; the sequence is IGGGIAGACL…RKLLKGKALC (431 aa).

The protein in the N-terminal section; belongs to the methyltransferase superfamily. tRNA (mnm(5)s(2)U34)-methyltransferase family. It in the C-terminal section; belongs to the DAO family. The cofactor is FAD.

The protein localises to the cytoplasm. The enzyme catalyses 5-aminomethyl-2-thiouridine(34) in tRNA + S-adenosyl-L-methionine = 5-methylaminomethyl-2-thiouridine(34) in tRNA + S-adenosyl-L-homocysteine + H(+). Its function is as follows. Catalyzes the last two steps in the biosynthesis of 5-methylaminomethyl-2-thiouridine (mnm(5)s(2)U) at the wobble position (U34) in tRNA. Catalyzes the FAD-dependent demodification of cmnm(5)s(2)U34 to nm(5)s(2)U34, followed by the transfer of a methyl group from S-adenosyl-L-methionine to nm(5)s(2)U34, to form mnm(5)s(2)U34. The chain is tRNA 5-methylaminomethyl-2-thiouridine biosynthesis bifunctional protein MnmC from Shewanella denitrificans (strain OS217 / ATCC BAA-1090 / DSM 15013).